Reading from the N-terminus, the 445-residue chain is tRNA-2-methylthio-N(6)-dimethylallyladenosine synthase (445 aa).

The region spanning 13–129 is the MTTase N-terminal domain; that stretch reads KKLFIKTYGC…LPAMARAGRG (117 aa). [4Fe-4S] cluster contacts are provided by Cys22, Cys58, Cys92, Cys163, Cys167, and Cys170. One can recognise a Radical SAM core domain in the interval 149–383; it reads TRRAPAAFLT…LTSQQKAAQE (235 aa). A TRAM domain is found at 383 to 445; it reads EGMVGRELGV…PNSLAGVLAA (63 aa).

This sequence belongs to the methylthiotransferase family. MiaB subfamily. In terms of assembly, monomer. [4Fe-4S] cluster serves as cofactor.

It is found in the cytoplasm. It carries out the reaction N(6)-dimethylallyladenosine(37) in tRNA + (sulfur carrier)-SH + AH2 + 2 S-adenosyl-L-methionine = 2-methylsulfanyl-N(6)-dimethylallyladenosine(37) in tRNA + (sulfur carrier)-H + 5'-deoxyadenosine + L-methionine + A + S-adenosyl-L-homocysteine + 2 H(+). In terms of biological role, catalyzes the methylthiolation of N6-(dimethylallyl)adenosine (i(6)A), leading to the formation of 2-methylthio-N6-(dimethylallyl)adenosine (ms(2)i(6)A) at position 37 in tRNAs that read codons beginning with uridine. The protein is tRNA-2-methylthio-N(6)-dimethylallyladenosine synthase of Paracoccus denitrificans (strain Pd 1222).